A 446-amino-acid chain; its full sequence is Cyclin-T1-1 (446 aa).

Belongs to the cyclin family. Cyclin T subfamily.

The sequence is that of Cyclin-T1-1 (CYCT1-1) from Oryza sativa subsp. japonica (Rice).